Here is a 149-residue protein sequence, read N- to C-terminus: Probable microsomal glutathione S-transferase (149 aa).

2 helical membrane passes run 7–27 and 123–143; these read SIFPDFIVFPSAISTIAIGLW and LSHISFFALLGGSAFGIGSSL.

The protein belongs to the MAPEG family.

The protein localises to the membrane. The enzyme catalyses RX + glutathione = an S-substituted glutathione + a halide anion + H(+). In terms of biological role, may perform the conjugation of reduced glutathione to electrophiles. This is Probable microsomal glutathione S-transferase (mgst) from Dictyostelium discoideum (Social amoeba).